Consider the following 294-residue polypeptide: Bifunctional protein FolD (294 aa).

NADP(+)-binding positions include 166-168, Ser191, and Ile232; that span reads GRS.

This sequence belongs to the tetrahydrofolate dehydrogenase/cyclohydrolase family. In terms of assembly, homodimer.

It carries out the reaction (6R)-5,10-methylene-5,6,7,8-tetrahydrofolate + NADP(+) = (6R)-5,10-methenyltetrahydrofolate + NADPH. It catalyses the reaction (6R)-5,10-methenyltetrahydrofolate + H2O = (6R)-10-formyltetrahydrofolate + H(+). It functions in the pathway one-carbon metabolism; tetrahydrofolate interconversion. In terms of biological role, catalyzes the oxidation of 5,10-methylenetetrahydrofolate to 5,10-methenyltetrahydrofolate and then the hydrolysis of 5,10-methenyltetrahydrofolate to 10-formyltetrahydrofolate. This is Bifunctional protein FolD from Bradyrhizobium diazoefficiens (strain JCM 10833 / BCRC 13528 / IAM 13628 / NBRC 14792 / USDA 110).